Here is a 536-residue protein sequence, read N- to C-terminus: MSYSIGIDFGTASGRVILADTSNGHIISRYEEDYANGTYMNSLYDKPLPENYFLQNADDYLQILEQGVQFVLEDSKVNKNDVVGIGVDFTSSTIIFLDEQFEPLHRHEDLKTNPHAYVKLWKHHGAQDEANYMIQMSKNKNWLDYYGSSVNSEWMIPKILEVKHEAPEILRRARYIMEAGDYITSILTNSNIRSNCGIGFKGFWDNEAGFNYDFFHSVDPDLPKIVKEKCEAPIISIGESAGRLCKDYQQIWGLSQDVQVSPFIIDAHSGVLGVGAIEAGEFTAVIGTSTCHLMLDSRQVPISSITGSVKNAIIPGLYAYEAGQPAVGDLFEYSKNQAPKHIVDQANEHHMHVLNYLEELASHIRIEEQHVVVLDWLNGNRSILSNSHLTGSIFGLTLQTPYEMIHRAYIEATAFGTKLIMKQFEDNHIPVHTVYASGGIPQKSKLLVEIYANVLNKRVVVIDSSNASALGAAMLGANVGNAYSTLKEAALSMKQPIAYIQEPEIQKVQAYKPLYHKYCELHDLLGRQYPELSYLI.

It belongs to the ribulokinase family.

The catalysed reaction is D-ribulose + ATP = D-ribulose 5-phosphate + ADP + H(+). It catalyses the reaction L-ribulose + ATP = L-ribulose 5-phosphate + ADP + H(+). The protein operates within carbohydrate degradation; L-arabinose degradation via L-ribulose; D-xylulose 5-phosphate from L-arabinose (bacterial route): step 2/3. This is Ribulokinase from Staphylococcus epidermidis (strain ATCC 35984 / DSM 28319 / BCRC 17069 / CCUG 31568 / BM 3577 / RP62A).